The primary structure comprises 362 residues: Ribosomal RNA large subunit methyltransferase F (362 aa).

Basic residues predominate over residues 1-28 (MNTPLKPKHGQKTNRKPKANKPVVKKQQ). Positions 1-40 (MNTPLKPKHGQKTNRKPKANKPVVKKQQTKQPPTHKVQGE) are disordered.

This sequence belongs to the methyltransferase superfamily. METTL16/RlmF family.

The protein resides in the cytoplasm. It catalyses the reaction adenosine(1618) in 23S rRNA + S-adenosyl-L-methionine = N(6)-methyladenosine(1618) in 23S rRNA + S-adenosyl-L-homocysteine + H(+). Functionally, specifically methylates the adenine in position 1618 of 23S rRNA. The protein is Ribosomal RNA large subunit methyltransferase F of Vibrio cholerae serotype O1 (strain M66-2).